Reading from the N-terminus, the 152-residue chain is Transcriptional repressor NrdR (152 aa).

Polar residues predominate over residues 1-10 (MKCPSCQHNG). The interval 1–21 (MKCPSCQHNGSRVLDSRPADE) is disordered. The segment at 3–34 (CPSCQHNGSRVLDSRPADEGKSIRRRRECEAC) is a zinc-finger region. The region spanning 49–139 (LIVVKKEGVR…VYRQFKDINV (91 aa)) is the ATP-cone domain.

It belongs to the NrdR family. Zn(2+) is required as a cofactor.

Negatively regulates transcription of bacterial ribonucleotide reductase nrd genes and operons by binding to NrdR-boxes. The protein is Transcriptional repressor NrdR of Bacillus velezensis (strain DSM 23117 / BGSC 10A6 / LMG 26770 / FZB42) (Bacillus amyloliquefaciens subsp. plantarum).